A 223-amino-acid polypeptide reads, in one-letter code: MATPQSIFIFAICILMITELILASKSYYDILGVPKSASERQIKKAFHKLAMKYHPDKNKSPDAEAKFREIAEAYETLSDANRRKEYDTLGHSAFTSGKGQRGSGSSFEQSFNFNFDDLFKDFGFFGQNQNTGSKKRFENHFQTRQDGGSSRQRHHFQEFSFGGGLFDDMFEDMEKMFSFSGFDSTNQHTVQTENRFHGSSKHCRTVTQRRGNMVTTYTDCSGQ.

The first 23 residues, 1–23, serve as a signal peptide directing secretion; the sequence is MATPQSIFIFAICILMITELILA. The J domain occupies 26-90; that stretch reads SYYDILGVPK…NRRKEYDTLG (65 aa). Residues 91–223 form a divergent targeting domain region; the sequence is HSAFTSGKGQ…VTTYTDCSGQ (133 aa). A Phosphoserine modification is found at S133.

As to quaternary structure, interacts with HSPA5/BiP; interaction is direct. Interacts with ERN1/IRE1 (via the luminal region). Interacts with DERL1. As to expression, widely expressed. Expressed at highest level in the liver, placenta and kidney.

Its subcellular location is the endoplasmic reticulum lumen. Co-chaperone for Hsp70 protein HSPA5/BiP that acts as a key repressor of the ERN1/IRE1-mediated unfolded protein response (UPR). J domain-containing co-chaperones stimulate the ATPase activity of Hsp70 proteins and are required for efficient substrate recognition by Hsp70 proteins. In the unstressed endoplasmic reticulum, interacts with the luminal region of ERN1/IRE1 and selectively recruits HSPA5/BiP: HSPA5/BiP disrupts the dimerization of the active ERN1/IRE1 luminal region, thereby inactivating ERN1/IRE1. Also involved in endoplasmic reticulum-associated degradation (ERAD) of misfolded proteins. Required for survival of B-cell progenitors and normal antibody production. This chain is DnaJ homolog subfamily B member 9 (DNAJB9), found in Homo sapiens (Human).